The chain runs to 679 residues: Transmembrane protein 214-B (679 aa).

The interval 1-94 (MASGAPDGKW…KKKPQSGDSV (94 aa)) is disordered. Residues 18–30 (KSGERREGERKAL) are compositionally biased toward basic and acidic residues. N-linked (GlcNAc...) asparagine glycosylation is found at N70, N298, and N322. 2 consecutive transmembrane segments (helical) span residues 468 to 488 (GGFP…GSVL) and 606 to 626 (LLLH…EAAV).

This sequence belongs to the TMEM214 family. Constitutively interacts with CASP4; required for the localization of procaspase 4 to the ER.

The protein localises to the endoplasmic reticulum membrane. Its function is as follows. Critical mediator, in cooperation with CASP4, of endoplasmic reticulum-stress induced apoptosis. Required or the activation of CASP4 following endoplasmic reticulum stress. This is Transmembrane protein 214-B (tmem214-b) from Xenopus laevis (African clawed frog).